Here is a 368-residue protein sequence, read N- to C-terminus: MEEDRVLSSVHSTVFKESESLEGKCDKIEGYDFNQGVNYPKLLRSMLTTGFQASNLGDVIDVVNQMLEWRLSDETIAPEDCSEEEKDPAYRESVKCKIFLGFTSNLVSSGVRETIRYLVQHHMVDVIVTTTGGVEEDLIKCLAPTFKGDFSLPGAYLRSKGLNRIGNLLVPNDNYCKFEDWIIPIFDQMLKEQKEESVLWTPSKLLARLGKEINNESSYLYWAYKMNIPVFCRGLTDGSLGDMLYFHSFRTSGLVIDVVQDIRAMNGEAVHATPRKTGMIILGGGLPKHHICNANMMRNGADYAVFINTGQEFDGSDSGARPDEAVSWGKIRGSAKTVKVYCDATIAFPLLVAETFASKREQSCEHKT.

NAD(+) is bound by residues 104–108, 130–132, Glu-136, and Asp-237; these read SNLVS and TTG. 135–136 lines the spermidine pocket; that stretch reads EE. Residue Asp-242 coordinates spermidine. Gly-284 is an NAD(+) binding site. His-289 lines the spermidine pocket. Residue 309–310 participates in NAD(+) binding; sequence TG. Residues 315 to 317 and 324 to 330 contribute to the spermidine site; these read GSD and EAVSWGK. Lys-330 acts as the Nucleophile in catalysis. 343–344 contacts NAD(+); the sequence is DA.

This sequence belongs to the deoxyhypusine synthase family. NAD(+) serves as cofactor.

The enzyme catalyses [eIF5A protein]-L-lysine + spermidine = [eIF5A protein]-deoxyhypusine + propane-1,3-diamine. The protein operates within protein modification; eIF5A hypusination. Functionally, catalyzes the NAD-dependent oxidative cleavage of spermidine and the subsequent transfer of the butylamine moiety of spermidine to the epsilon-amino group of a specific lysine residue of the eIF-5A precursor protein to form the intermediate deoxyhypusine residue. Also able to produce homospermidine from putrescine. The chain is Deoxyhypusine synthase (DHS) from Brassica napus (Rape).